A 118-amino-acid chain; its full sequence is Neutral phospholipase A2 homolog taipoxin beta chain 2 (118 aa).

Disulfide bonds link Cys11–Cys71, Cys27–Cys117, Cys29–Cys45, Cys44–Cys98, Cys51–Cys91, Cys60–Cys84, and Cys78–Cys89.

Belongs to the phospholipase A2 family. Group I subfamily. D49 sub-subfamily. As to quaternary structure, heterotrimer of alpha, beta, and gamma chains; non-covalently linked. In terms of tissue distribution, expressed by the venom gland.

The protein resides in the secreted. Heterotrimer: Snake venom phospholipase A2 (PLA2) heterotrimer that acts as a potent presynaptic neurotoxin by blocking synaptic transmission and synaptic vesicle recycling. May act by binding in a calcium-dependent fashion to neurotonal pentraxin-1 (NPTX1) and neurotonal pentraxin-2 (NPTX2), but not to neuronal pentraxin receptor (NPTXR). Also binds to taipoxin-associated calcium binding protein 49 (RCN2), a protein localized in the lumen of endoplasmic reticulum. In terms of biological role, monomer (beta chain): Snake venom phospholipase A2 homolog that is neither toxic nor enzymatically active. Does not bind calcium. The sequence is that of Neutral phospholipase A2 homolog taipoxin beta chain 2 from Oxyuranus scutellatus scutellatus (Australian taipan).